We begin with the raw amino-acid sequence, 552 residues long: Glutamine--tRNA ligase (552 aa).

The 'HIGH' region motif lies at 34-44 (PEPNGYLHIGH). ATP is bound by residues 35–37 (EPN) and 41–47 (HIGHAKS). L-glutamine-binding residues include D67 and Y212. ATP contacts are provided by residues T231, 261–262 (RL), and 269–271 (MSK). The 'KMSKS' region motif lies at 268 to 272 (VMSKR).

It belongs to the class-I aminoacyl-tRNA synthetase family. Monomer.

The protein localises to the cytoplasm. The catalysed reaction is tRNA(Gln) + L-glutamine + ATP = L-glutaminyl-tRNA(Gln) + AMP + diphosphate. This is Glutamine--tRNA ligase from Aliivibrio fischeri (strain MJ11) (Vibrio fischeri).